The following is a 127-amino-acid chain: Holo-[acyl-carrier-protein] synthase (127 aa).

Mg(2+)-binding residues include D7 and E56.

The protein belongs to the P-Pant transferase superfamily. AcpS family. Mg(2+) serves as cofactor.

It is found in the cytoplasm. It carries out the reaction apo-[ACP] + CoA = holo-[ACP] + adenosine 3',5'-bisphosphate + H(+). Its function is as follows. Transfers the 4'-phosphopantetheine moiety from coenzyme A to a Ser of acyl-carrier-protein. The chain is Holo-[acyl-carrier-protein] synthase from Onion yellows phytoplasma (strain OY-M).